Here is a 943-residue protein sequence, read N- to C-terminus: Mechanosensitive ion channel protein BA (943 aa).

Positions 1–67 are disordered; the sequence is MPNPNDVTID…PPSSSLGFGH (67 aa). Residues 1-107 are Cytoplasmic-facing; sequence MPNPNDVTID…AVLNFSTVTR (107 aa). Residues 14 to 37 are compositionally biased toward polar residues; sequence TSVSSRGQTGARNNSTNIPNSPSG. A helical membrane pass occupies residues 108–130; the sequence is YLIYIAPLAALLAIPIIVGATAA. Residues 131 to 149 lie on the Lumenal side of the membrane; it reads EDAKIGGVSLPWFFCWVEV. The helical transmembrane segment at 150 to 175 threads the bilayer; the sequence is VWVSLWVCKLVAKVIPFVFQFVCGIV. Residues 176-195 lie on the Cytoplasmic side of the membrane; the sequence is SAGTRKYALILRNLEIPITM. A helical membrane pass occupies residues 196–214; it reads VLWMIVSLVTFLPIMVYNP. The Lumenal segment spans residues 215-233; sequence RNKREGDTETKSWEKSVKN. A helical membrane pass occupies residues 234–259; sequence VLFAFLVCALIFLGEKTLVQLISISY. The Cytoplasmic portion of the chain corresponds to 260-468; the sequence is HRKQFDARIK…DQAIHVLDNL (209 aa). Residues 412–447 enclose the EF-hand domain; sequence GKEAEAEECFTMLDRDGNGDISLDEIILAISEIGRT. 5 residues coordinate Ca(2+): D425, D427, N429, D431, and E436. A helical membrane pass occupies residues 469–489; it reads LATIAFIIAVLVFVSFVTSGF. The Lumenal segment spans residues 490–502; it reads GTVIAAGATSLLS. The helical transmembrane segment at 503-523 threads the bilayer; sequence LSFVFATTAQEVLGSCIFLFV. Topologically, residues 524–943 are cytoplasmic; the sequence is KHPFDIGDRV…QRRNYESRRL (420 aa). A disordered region spans residues 677–943; that stretch reads PGAAAEDAAA…QRRNYESRRL (267 aa). 2 stretches are compositionally biased toward low complexity: residues 678–687 and 744–759; these read GAAAEDAAAA and GASA…AGSA. A compositionally biased stretch (polar residues) spans 760–781; it reads YSETTLNNTVSEPYQRSFTPNT. The segment covering 798-810 has biased composition (basic and acidic residues); it reads TERHLGVSHDSIA. The span at 827–842 shows a compositional bias: polar residues; sequence TTANQSLASPTTMQSE. The span at 857–880 shows a compositional bias: low complexity; it reads PSSSQYSQQYPQQQSQSPYSYTYS. The span at 886–904 shows a compositional bias: polar residues; it reads PESSLQPLEHTTSYNQSLP. The segment covering 916–943 has biased composition (basic and acidic residues); sequence NSLEGHSPHVDPRHMTEEQRRNYESRRL.

Belongs to the MscS (TC 1.A.23) family.

The protein localises to the cell membrane. The catalysed reaction is Ca(2+)(in) = Ca(2+)(out). Functionally, acts as a mechanosensitive calcium channel in response to membrane stretch. Regulates intracellular calcium levels and cell volume for survival in response to hypo-osmotic shock. Involved in maintaining vacuole integrity and protecting the nuclear envelope upon hypo-osmotic shock. seems to contribute to CaCl2 toxicityIn contracstz to mscA, mscB seems to contribute to CaCl(2) toxicity. This chain is Mechanosensitive ion channel protein BA, found in Emericella nidulans (strain FGSC A4 / ATCC 38163 / CBS 112.46 / NRRL 194 / M139) (Aspergillus nidulans).